Reading from the N-terminus, the 382-residue chain is Sphingosine 1-phosphate receptor 1 (382 aa).

At Met1 to Lys46 the chain is on the extracellular side. Lys10 is modified (N6-acetyllysine). Asn30 carries N-linked (GlcNAc...) asparagine glycosylation. A helical membrane pass occupies residues Leu47–Leu68. Residues Thr69–Tyr82 are Cytoplasmic-facing. Residues Phe83–Leu104 form a helical membrane-spanning segment. Topologically, residues Ser105–Gln116 are extracellular. The chain crosses the membrane as a helical span at residues Trp117–Ile138. Arg120–Glu121 lines the sphing-4-enine 1-phosphate pocket. At Ala139–Ser160 the chain is on the cytoplasmic side. A helical transmembrane segment spans residues Phe161 to Trp182. The Extracellular portion of the chain corresponds to Asn183–Pro196. Cys184 and Cys191 are joined by a disulfide. A helical membrane pass occupies residues Leu197 to Ile224. Residues Tyr225–Thr257 are Cytoplasmic-facing. Thr236 carries the phosphothreonine; by PKB/AKT1 modification. The chain crosses the membrane as a helical span at residues Val258 to Leu278. Sphing-4-enine 1-phosphate is bound at residue Phe265–Trp269. Topologically, residues Asp279–Ile289 are extracellular. Cys282 and Cys287 are disulfide-bonded. The helical transmembrane segment at Leu290 to Ile310 threads the bilayer. At Tyr311–Ser382 the chain is on the cytoplasmic side. The S-palmitoyl cysteine moiety is linked to residue Cys328. Residues Glu349–Ser382 are disordered. A phosphoserine mark is found at Ser351 and Ser353. Residues Ser351–Gly366 show a composition bias toward basic and acidic residues. The span at Thr371–Ser382 shows a compositional bias: polar residues.

It belongs to the G-protein coupled receptor 1 family. Interacts with GNAI1 and GNAI3. Interacts with CD69; this interaction promotes S1PR1 degradation. S1P-induced endothelial cell migration requires the PKB/AKT1-mediated phosphorylation of the third intracellular loop at the Thr-236 residue. Post-translationally, palmitoylated by ZDHHC5. Palmitoylation is required for targeting to plasma membrane, enabling G(i) coupling.

It is found in the cell membrane. Its subcellular location is the endosome. The protein resides in the membrane raft. In terms of biological role, G-protein coupled receptor for the bioactive lysosphingolipid sphingosine 1-phosphate (S1P) that seems to be coupled to the G(i) subclass of heteromeric G proteins. Signaling leads to the activation of RAC1, SRC, PTK2/FAK1 and MAP kinases. Plays an important role in cell migration, probably via its role in the reorganization of the actin cytoskeleton and the formation of lamellipodia in response to stimuli that increase the activity of the sphingosine kinase SPHK1. Required for normal chemotaxis toward sphingosine 1-phosphate. Required for normal embryonic heart development and normal cardiac morphogenesis. Plays an important role in the regulation of sprouting angiogenesis and vascular maturation. Inhibits sprouting angiogenesis to prevent excessive sprouting during blood vessel development. Required for normal egress of mature T-cells from the thymus into the blood stream and into peripheral lymphoid organs. Plays a role in the migration of osteoclast precursor cells, the regulation of bone mineralization and bone homeostasis. Plays a role in responses to oxidized 1-palmitoyl-2-arachidonoyl-sn-glycero-3-phosphocholine by pulmonary endothelial cells and in the protection against ventilator-induced lung injury. This chain is Sphingosine 1-phosphate receptor 1 (S1PR1), found in Bos taurus (Bovine).